A 64-amino-acid polypeptide reads, in one-letter code: Bacteriocin plantaricin ASM1 (64 aa).

A signal peptide spans 1–21 (MSKLVKTLTVDEISKIQTNGG). Positions 61-64 (SYHC) form a cross-link, lanthionine (Ser-Cys).

In terms of processing, contains 2 disulfide bonds.

Its subcellular location is the secreted. Bacteriocin with a narrow antibacterial spectrum. Antibacterial activity against the Gram-positive bacteria L.plantarun, L.pentosus, L.curvatus, L.lindneri, L.mesenteroides and E.faecilis. Lacks antibacterial activity against the Gram-positive bacteria L.brevis, L.sakei, L.lactis, P.acidilactici, B.subtilis, B.cereus, L.monocytogenes and S.aureus, and against the Gram-negative bacteria E.coli and S.typhimurium. In Lactiplantibacillus plantarum (Lactobacillus plantarum), this protein is Bacteriocin plantaricin ASM1.